Consider the following 706-residue polypeptide: Choline transporter-like protein 2 (706 aa).

At 1–33 (MGKDSQNYYGKHGTPQKYDPTFKGPIYNRGCTD) the chain is on the cytoplasmic side. Thr-14 bears the Phosphothreonine mark. The chain crosses the membrane as a helical span at residues 34–54 (VICCVLLFLAIVGYVAVGIIA). Over 55-232 (WTHGDPRKVI…QIFEDYTVSW (178 aa)) the chain is Extracellular. Residues Asn-187 and Asn-200 are each glycosylated (N-linked (GlcNAc...) asparagine). Residues 233–253 (YWIIIGLVIAMVLSLLFIVLL) form a helical membrane-spanning segment. Over 254-256 (RFL) the chain is Cytoplasmic. A helical membrane pass occupies residues 257-277 (AGIMVWVMIVMVILVLGYGIF). At 278-315 (HCYMEYSRLRGEAGSDVSLVDLGFQTDLRVYLHLRQTW) the chain is on the extracellular side. The helical transmembrane segment at 316 to 336 (MAFMIILSILEVVIILLLIFL) threads the bilayer. The Cytoplasmic segment spans residues 337-364 (RKRILIAIALIKEASRAVGHVMCSLLYP). The helical transmembrane segment at 365–385 (LVTFFLLCLCIAYWASTSVFL) threads the bilayer. At 386–454 (STSNTAVYKV…LQIFNAFMFF (69 aa)) the chain is on the extracellular side. A glycan (N-linked (GlcNAc...) asparagine) is linked at Asn-417. A helical membrane pass occupies residues 455–477 (WLANFVLALGQVTLAGAFASYYW). The Cytoplasmic portion of the chain corresponds to 478–504 (AMRKPDDMPAFPLFSAFGRALRYHTGS). The helical transmembrane segment at 505–525 (LAFGSLILAIVQIIRVMLEYL) threads the bilayer. At 526-563 (DQRLKAAQNKFAKFLMVCLKCCFWCLEKFIKFLNRNAY) the chain is on the extracellular side. The helical transmembrane segment at 564-584 (IMIAIYGTNFCTSARNAFFLL) threads the bilayer. The Cytoplasmic segment spans residues 585 to 599 (MRNIIRVAVLDKVTD). The chain crosses the membrane as a helical span at residues 600-620 (FLFLLGKLLIVGSVGILAFFF). The Extracellular portion of the chain corresponds to 621 to 638 (FTHRIRIVQDTAPPLNYY). Residues 639–659 (WVPILTVIIGSYLIAHGFFSV) form a helical membrane-spanning segment. Topologically, residues 660 to 706 (YGMCVDTLFLCFLEDLERNDGSAERPYFMSSTLKKLLNKTNKKVAES) are cytoplasmic.

Belongs to the CTL (choline transporter-like) family. As to quaternary structure, interacts with COCH. In terms of processing, glycosylated, glycosylation differs from tissue to tissue. The molecular mass of the mature glycosylated protein is highest in kidney, followed by lung, colon and spleen, then brain and tongue. As to expression, expressed at high levels in lung, colon, inner ear and spleen (at protein level). Progressively lower levels in brain, tongue, liver and kidney (at protein level). In the kidney, prominent expression in glomeruli in the lining of Bowman's capsule and on the mesangial cells adjacent to the vessels within the glomerulus (at protein level). Strongly expressed on the membranes of splenocytes and in lung parenchyme (at protein level). In terms of tissue distribution, expressed at higher levels than isoform 2 in colon, heart, kidney, lung, cochlea, tongue and muscle, as well as in the inner ear. Predominantly expressed in brain, liver and spleen.

It localises to the cell membrane. Its subcellular location is the mitochondrion outer membrane. The catalysed reaction is choline(out) + n H(+)(in) = choline(in) + n H(+)(out). The enzyme catalyses ethanolamine(out) + n H(+)(in) = ethanolamine(in) + n H(+)(out). Its function is as follows. Choline/H+ antiporter, mainly in mitochodria. Also acts as a low-affinity ethanolamine/H+ antiporter, regulating the supply of extracellular ethanolamine (Etn) for the CDP-Etn pathway, redistribute intracellular Etn and balance the CDP-Cho and CDP-Etn arms of the Kennedy pathway. The protein is Choline transporter-like protein 2 (Slc44a2) of Mus musculus (Mouse).